The following is a 118-amino-acid chain: Large ribosomal subunit protein uL18 (118 aa).

It belongs to the universal ribosomal protein uL18 family. In terms of assembly, part of the 50S ribosomal subunit; part of the 5S rRNA/L5/L18/L25 subcomplex. Contacts the 5S and 23S rRNAs.

Its function is as follows. This is one of the proteins that bind and probably mediate the attachment of the 5S RNA into the large ribosomal subunit, where it forms part of the central protuberance. This is Large ribosomal subunit protein uL18 from Helicobacter hepaticus (strain ATCC 51449 / 3B1).